The chain runs to 346 residues: Methylthioribose-1-phosphate isomerase (346 aa).

Residues 46–48 (RGA), R89, and Q196 each bind substrate. D237 functions as the Proton donor in the catalytic mechanism. Substrate is bound at residue 247 to 248 (NK).

This sequence belongs to the eIF-2B alpha/beta/delta subunits family. MtnA subfamily.

The catalysed reaction is 5-(methylsulfanyl)-alpha-D-ribose 1-phosphate = 5-(methylsulfanyl)-D-ribulose 1-phosphate. It participates in amino-acid biosynthesis; L-methionine biosynthesis via salvage pathway; L-methionine from S-methyl-5-thio-alpha-D-ribose 1-phosphate: step 1/6. Catalyzes the interconversion of methylthioribose-1-phosphate (MTR-1-P) into methylthioribulose-1-phosphate (MTRu-1-P). This is Methylthioribose-1-phosphate isomerase from Geobacter sp. (strain M21).